The sequence spans 299 residues: AUGMIN subunit 1 (299 aa).

N-acetylserine is present on Ser2. Coiled coils occupy residues 76–96 (RLKA…LESA) and 164–184 (RKAI…EDDV).

It belongs to the HAUS1 family. As to quaternary structure, part of the augmin complex composed of 8 subunits. The complex acts on microtubules and interacts with gamma-tubulin in spindles and the phragmoplast. Interacts with AUG3.

The protein resides in the cytoplasm. It is found in the cytoskeleton. Its subcellular location is the spindle. The protein localises to the phragmoplast. Involved in microtubules reorganization during spindle and phragmoplast development. The protein is AUGMIN subunit 1 of Arabidopsis thaliana (Mouse-ear cress).